Here is a 533-residue protein sequence, read N- to C-terminus: Spindle pole body protein CSA6 (533 aa).

Disordered regions lie at residues 1–32 and 53–130; these read MEDS…SDLT and DKYD…QEDE. Composition is skewed to basic and acidic residues over residues 18–30 and 53–68; these read PEIK…KTSD and DKYD…DLTP. The segment covering 83–94 has biased composition (low complexity); sequence PSKFSSSIPQKP. Polar residues predominate over residues 103-121; that stretch reads SSPTKNYTDHINQLRSGPN. The stretch at 136–236 forms a coiled coil; it reads KYEIKRLKQE…RSERDELVKD (101 aa). A compositionally biased stretch (basic and acidic residues) spans 309–318; the sequence is EKDKPSEDKT. 2 disordered regions span residues 309 to 329 and 349 to 453; these read EKDK…SKDA and SANS…QSTK. Polar residues-rich tracts occupy residues 349–392 and 405–421; these read SANS…SNSQ and IYSS…QSSH. A compositionally biased stretch (basic and acidic residues) spans 432–445; sequence PRVERDHWTDRPPS.

It is found in the cytoplasm. The protein localises to the cytoskeleton. It localises to the microtubule organizing center. The protein resides in the spindle pole body. In terms of biological role, plays a role in mitotic spindle pole body organization, possibly at the point of spindle pole body separation. Required for mitotic exit. The chain is Spindle pole body protein CSA6 from Candida dubliniensis (strain CD36 / ATCC MYA-646 / CBS 7987 / NCPF 3949 / NRRL Y-17841) (Yeast).